The chain runs to 219 residues: Thiamine-phosphate synthase (219 aa).

4-amino-2-methyl-5-(diphosphooxymethyl)pyrimidine-binding positions include 44–48 and asparagine 79; that span reads QFREK. Positions 80 and 99 each coordinate Mg(2+). Serine 117 lines the 4-amino-2-methyl-5-(diphosphooxymethyl)pyrimidine pocket. 143–145 serves as a coordination point for 2-[(2R,5Z)-2-carboxy-4-methylthiazol-5(2H)-ylidene]ethyl phosphate; that stretch reads TST. Lysine 146 contributes to the 4-amino-2-methyl-5-(diphosphooxymethyl)pyrimidine binding site. 2-[(2R,5Z)-2-carboxy-4-methylthiazol-5(2H)-ylidene]ethyl phosphate is bound by residues glycine 175 and 195 to 196; that span reads IS.

The protein belongs to the thiamine-phosphate synthase family. Requires Mg(2+) as cofactor.

It carries out the reaction 2-[(2R,5Z)-2-carboxy-4-methylthiazol-5(2H)-ylidene]ethyl phosphate + 4-amino-2-methyl-5-(diphosphooxymethyl)pyrimidine + 2 H(+) = thiamine phosphate + CO2 + diphosphate. The enzyme catalyses 2-(2-carboxy-4-methylthiazol-5-yl)ethyl phosphate + 4-amino-2-methyl-5-(diphosphooxymethyl)pyrimidine + 2 H(+) = thiamine phosphate + CO2 + diphosphate. The catalysed reaction is 4-methyl-5-(2-phosphooxyethyl)-thiazole + 4-amino-2-methyl-5-(diphosphooxymethyl)pyrimidine + H(+) = thiamine phosphate + diphosphate. Its pathway is cofactor biosynthesis; thiamine diphosphate biosynthesis; thiamine phosphate from 4-amino-2-methyl-5-diphosphomethylpyrimidine and 4-methyl-5-(2-phosphoethyl)-thiazole: step 1/1. Its function is as follows. Condenses 4-methyl-5-(beta-hydroxyethyl)thiazole monophosphate (THZ-P) and 2-methyl-4-amino-5-hydroxymethyl pyrimidine pyrophosphate (HMP-PP) to form thiamine monophosphate (TMP). This Bacillus cereus (strain B4264) protein is Thiamine-phosphate synthase.